The following is a 204-amino-acid chain: Lymphotoxin-alpha (204 aa).

The first 33 residues, 1 to 33 (MTPPGRLYLRRVCSTPILLLLGLLLALPPEAQG), serve as a signal peptide directing secretion. The THD domain maps to 62–204 (PAAHLVGDPS…SSVFFGAFAL (143 aa)). An N-linked (GlcNAc...) asparagine glycan is attached at Asn95. A disulfide bond links Cys119 and Cys155.

The protein belongs to the tumor necrosis factor family. Homotrimer, and heterotrimer of either two LTB and one LTA subunits or (less prevalent) two LTA and one LTB subunits. Interacts with TNFRSF14.

Its subcellular location is the secreted. It localises to the membrane. In terms of biological role, cytokine that in its homotrimeric form binds to TNFRSF1A/TNFR1, TNFRSF1B/TNFBR and TNFRSF14/HVEM. In its heterotrimeric form with LTB binds to TNFRSF3/LTBR. Lymphotoxin is produced by lymphocytes and is cytotoxic for a wide range of tumor cells in vitro and in vivo. The sequence is that of Lymphotoxin-alpha (LTA) from Sus scrofa (Pig).